The chain runs to 305 residues: Deoxyhypusine hydroxylase (305 aa).

HEAT-like PBS-type repeat units lie at residues 54–80 (LKHE…VLKD) and 87–113 (VRHE…YAED). Fe cation-binding residues include H56, H89, and E90. The disordered stretch occupies residues 137–160 (EQTKDGTDENPYCSVDPAPPAQRK). HEAT-like PBS-type repeat units lie at residues 178-204 (DRYR…GLQC), 209-235 (FRHE…ALEK), and 242-268 (VRHE…YRKD). Positions 211, 244, and 245 each coordinate Fe cation.

This sequence belongs to the deoxyhypusine hydroxylase family. The cofactor is Fe(2+).

It catalyses the reaction [eIF5A protein]-deoxyhypusine + AH2 + O2 = [eIF5A protein]-hypusine + A + H2O. It participates in protein modification; eIF5A hypusination. Its function is as follows. Catalyzes the hydroxylation of the N(6)-(4-aminobutyl)-L-lysine intermediate produced by deoxyhypusine synthase/DHPS on a critical lysine of the eukaryotic translation initiation factor 5A/eIF-5A. This is the second step of the post-translational modification of that lysine into an unusual amino acid residue named hypusine. Hypusination is unique to mature eIF-5A factor and is essential for its function. The protein is Deoxyhypusine hydroxylase (dohh) of Danio rerio (Zebrafish).